The chain runs to 261 residues: Thioesterase TesA (261 aa).

The disordered stretch occupies residues 1–24 (MLARHGPRYGGSVNGHSDDSSGDA). Catalysis depends on residues S104, D208, and H236.

This sequence belongs to the thioesterase family.

It catalyses the reaction a fatty acyl-CoA + H2O = a fatty acid + CoA + H(+). Functionally, involved in the synthesis of both phthiocerol dimycocerosates (PDIMs) and phenolic glycolipids (PGLs), which are structurally related lipids non-covalently bound to the outer cell wall layer of M.tuberculosis and are important virulence factors. This is Thioesterase TesA (tesA) from Mycobacterium bovis (strain ATCC BAA-935 / AF2122/97).